Here is a 555-residue protein sequence, read N- to C-terminus: Putative polyketide hydroxylase (555 aa).

Residues 16–45 (PVLVVGGSLVGLSTSVFLGRLGVRHMLVER) and 303–313 (YRAGRVFLAGD) each bind FAD. The disordered stretch occupies residues 366-395 (ATTARAAARSAEHSHPGFAPPPGTSGGPQG).

It belongs to the PheA/TfdB FAD monooxygenase family. It depends on FAD as a cofactor.

Functionally, involved in developmentally regulated synthesis of a compound biosynthetically related to polyketide antibiotics which is essential for spore color in Streptomyces halstedii. The protein is Putative polyketide hydroxylase (schC) of Streptomyces halstedii.